Consider the following 49-residue polypeptide: Large ribosomal subunit protein bL33B (49 aa).

It belongs to the bacterial ribosomal protein bL33 family.

This Staphylococcus epidermidis (strain ATCC 12228 / FDA PCI 1200) protein is Large ribosomal subunit protein bL33B (rpmG2).